The primary structure comprises 319 residues: Ferrochelatase (319 aa).

Histidine 192 and glutamate 271 together coordinate Fe cation.

This sequence belongs to the ferrochelatase family.

It localises to the cytoplasm. It catalyses the reaction heme b + 2 H(+) = protoporphyrin IX + Fe(2+). It participates in porphyrin-containing compound metabolism; protoheme biosynthesis; protoheme from protoporphyrin-IX: step 1/1. Catalyzes the ferrous insertion into protoporphyrin IX. This chain is Ferrochelatase, found in Geotalea daltonii (strain DSM 22248 / JCM 15807 / FRC-32) (Geobacter daltonii).